Reading from the N-terminus, the 298-residue chain is Arginine/serine-rich protein 1 (298 aa).

A disordered region spans residues 1 to 135 (MSSAAMSKYV…SRSRSRGRSQ (135 aa)). A Phosphoserine modification is found at Ser17. Residues 23–36 (SPSTSGSGRSSRLS) are compositionally biased toward low complexity. A compositionally biased stretch (basic residues) spans 60-105 (SRSHSRPRRSRRSRSRSRRRHQRKYRRYSRSYSRSRSRSRSHRYHR). Phosphoserine occurs at positions 118 and 120. Positions 124-135 (SRSRSRSRGRSQ) are enriched in basic residues. Arg145 is modified (omega-N-methylarginine). Disordered stretches follow at residues 161–181 (RPRWRERSRTRSRSRSRTPFR) and 218–298 (ASQG…WIPV). The span at 219-228 (SQGTAVSSSG) shows a compositional bias: polar residues. Positions 230–246 (KVEHSEKQTEDATKNTS) are enriched in basic and acidic residues. The span at 247 to 271 (EKSSTQRNIAFSSNNSVAKPLQKTT) shows a compositional bias: polar residues. The span at 274–289 (AVEEKSSGSPKIDKKK) shows a compositional bias: basic and acidic residues. Ser282 bears the Phosphoserine mark.

The protein belongs to the RSRP family. Post-translationally, phosphorylated. Phosphorylation at Ser-118 and Ser-120 mediates the interaction with spliceosome proteins.

The protein resides in the nucleus. Probably acts as a spliceosomal factor that contributes to spliceosome assembly and regulates the isoform switching of proteins such as PARP6. This is Arginine/serine-rich protein 1 (Rsrp1) from Mus musculus (Mouse).